The following is a 221-amino-acid chain: Ribosomal RNA small subunit methyltransferase Nep1 (221 aa).

Residues glycine 174, glycine 179, and 196–201 contribute to the S-adenosyl-L-methionine site; that span reads LGEVAM.

Belongs to the class IV-like SAM-binding methyltransferase superfamily. RNA methyltransferase NEP1 family. In terms of assembly, homodimer.

It carries out the reaction a pseudouridine in rRNA + S-adenosyl-L-methionine = an N(1)-methylpseudouridine in rRNA + S-adenosyl-L-homocysteine + H(+). Its function is as follows. Methyltransferase involved in ribosomal biogenesis. Specifically catalyzes the N1-methylation of the pseudouridine corresponding to position 914 in M.jannaschii 16S rRNA. This chain is Ribosomal RNA small subunit methyltransferase Nep1, found in Pyrobaculum arsenaticum (strain DSM 13514 / JCM 11321 / PZ6).